A 271-amino-acid polypeptide reads, in one-letter code: Glutamate racemase (271 aa).

Residues 10–11 and 42–43 contribute to the substrate site; these read DS and YG. Cysteine 73 functions as the Proton donor/acceptor in the catalytic mechanism. 74–75 lines the substrate pocket; the sequence is NT. Catalysis depends on cysteine 183, which acts as the Proton donor/acceptor. Residue 184 to 185 participates in substrate binding; sequence TH.

This sequence belongs to the aspartate/glutamate racemases family.

The enzyme catalyses L-glutamate = D-glutamate. It participates in cell wall biogenesis; peptidoglycan biosynthesis. Functionally, provides the (R)-glutamate required for cell wall biosynthesis. This is Glutamate racemase from Lactococcus lactis subsp. cremoris (strain SK11).